Reading from the N-terminus, the 228-residue chain is uncharacterized protein (228 aa).

Belongs to the ascovirus HvAv ORF57 family.

This is an uncharacterized protein from Trichoplusia ni ascovirus 2c (TnAV-2c).